The primary structure comprises 204 residues: Protease (204 aa).

Residues His-53, Asp-70, and Cys-121 contribute to the active site.

Belongs to the peptidase C5 family. As to quaternary structure, interacts with protease cofactor pVI-C; this interaction is necessary for protease activation.

It localises to the virion. The protein resides in the host nucleus. It catalyses the reaction Cleaves proteins of the adenovirus and its host cell at two consensus sites: -Yaa-Xaa-Gly-Gly-|-Xaa- and -Yaa-Xaa-Gly-Xaa-|-Gly- (in which Yaa is Met, Ile or Leu, and Xaa is any amino acid).. Requires DNA and protease cofactor for maximal activation. Inside nascent virions, becomes partially activated by binding to the viral DNA, allowing it to cleave the cofactor that binds to the protease and fully activates it. Actin, like the viral protease cofactor, seems to act as a cofactor in the cleavage of cytokeratin 18 and of actin itself. Cleaves viral precursor proteins (pTP, pIIIa, pVI, pVII, pVIII, and pX) inside newly assembled particles giving rise to mature virions. Protease complexed to its cofactor slides along the viral DNA to specifically locate and cleave the viral precursors. Mature virions have a weakened organization compared to the unmature virions, thereby facilitating subsequent uncoating. Without maturation, the particle lacks infectivity and is unable to uncoat. Late in adenovirus infection, in the cytoplasm, may participate in the cytoskeleton destruction. Cleaves host cell cytoskeletal keratins K7 and K18. This is Protease from Porcine adenovirus A serotype 3 (PAdV-3).